The sequence spans 1055 residues: SMC5-SMC6 complex localization factor protein 1 (1055 aa).

BRCT domains follow at residues 2-80 (EDDA…AQSG) and 121-199 (PGAF…LLEK). Positions 312-332 (KKRKKEKERDSRKDIEHDRST) are disordered. The segment covering 318–332 (KERDSRKDIEHDRST) has biased composition (basic and acidic residues). An NSE5-like domain; mediates interaction with SLF2 region spans residues 407 to 1055 (PRGILNLIES…VMCRSVTEIS (649 aa)). ANK repeat units lie at residues 804–834 (KGETALHRACINNQVDRLILLLSMPGIDINV), 838–867 (AGWTPLHEACNYGNTVCVQEILQRCPEVDL), and 872–901 (DGVTPLHDALSNGHVEIGKLLLQHGGPVLL). Residue lysine 929 forms a Glycyl lysine isopeptide (Lys-Gly) (interchain with G-Cter in SUMO2) linkage.

In terms of assembly, interacts (via N-terminus) with SLF2; this interaction links RAD18 to the SMC5-SMC6 complex. Interacts (via BRCT domains) with RAD18; this interaction occurs in a SLF2-independent manner. Interacts with SMC6. Interacts (via BRCT domains) with RAD18 (via C-terminus and phosphorylated form); this interaction is required for efficient repair of UV-induced DNA damage.

Its subcellular location is the nucleus. It localises to the cytoplasm. The protein localises to the cytoskeleton. The protein resides in the microtubule organizing center. It is found in the centrosome. Functionally, plays a role in the DNA damage response (DDR) pathway by regulating postreplication repair of UV-damaged DNA and genomic stability maintenance. The SLF1-SLF2 complex acts to link RAD18 with the SMC5-SMC6 complex at replication-coupled interstrand cross-links (ICL) and DNA double-strand breaks (DSBs) sites on chromatin during DNA repair in response to stalled replication forks. Promotes the recruitment of SLF2 and the SMC5-SMC6 complex to DNA lesions. This is SMC5-SMC6 complex localization factor protein 1 from Bos taurus (Bovine).